The following is a 191-amino-acid chain: Imidazoleglycerol-phosphate dehydratase (191 aa).

This sequence belongs to the imidazoleglycerol-phosphate dehydratase family.

The protein localises to the cytoplasm. The enzyme catalyses D-erythro-1-(imidazol-4-yl)glycerol 3-phosphate = 3-(imidazol-4-yl)-2-oxopropyl phosphate + H2O. It participates in amino-acid biosynthesis; L-histidine biosynthesis; L-histidine from 5-phospho-alpha-D-ribose 1-diphosphate: step 6/9. The sequence is that of Imidazoleglycerol-phosphate dehydratase from Methanosarcina barkeri (strain Fusaro / DSM 804).